Consider the following 415-residue polypeptide: Mannosylglycerate hydrolase (415 aa).

Residues Tyr-23, 27–30 (WLWD), Tyr-76, Gln-98, and Gly-158 each bind substrate. Asp-160 (proton donor) is an active-site residue. Substrate-binding positions include Arg-193 and 344–345 (YW). Glu-388 functions as the Proton acceptor in the catalytic mechanism.

Belongs to the glycosyl hydrolase 63 family. As to quaternary structure, homotetramer in solution.

The catalysed reaction is (2R)-2-O-(alpha-D-mannosyl)-glycerate + H2O = D-mannose + (R)-glycerate. It carries out the reaction (2R)-2-O-(alpha-D-glucopyranosyl)-glycerate + H2O = (R)-glycerate + D-glucose. Activity is not stimulated by divalent cations and not affected in the presence of EDTA. In terms of biological role, hydrolase that catalyzes the hydrolysis of mannosylglycerate (MG), a solute produced in response to osmotic stress in thermophiles, into mannose and glycerate. Can also hydrolyze glucosylglycerate (GG) to glucose and glycerate, with similar catalytic efficiency. Is highly specific for MG and GG, and cannot use mannosylglyceramide (MGA), glucosylglycerol, mannosylglucosylglycerate (MGG), glucosylglucosylglycerate (GGG) or trehalose as substrates. In Thermus thermophilus (strain ATCC BAA-163 / DSM 7039 / HB27), this protein is Mannosylglycerate hydrolase.